We begin with the raw amino-acid sequence, 553 residues long: Putative transport protein KPN78578_40470 (553 aa).

A run of 5 helical transmembrane segments spans residues 4 to 24, 28 to 48, 65 to 85, 95 to 115, and 158 to 178; these read IALT…IGNV, GVGF…HFVD, FGLI…FFAS, LFAI…HKLF, and MSYA…MWLV. RCK C-terminal domains follow at residues 192–276 and 279–361; these read RFEE…VIGQ and ATSL…ELGN. The next 6 helical transmembrane spans lie at 371–391, 403–425, 437–457, 464–484, 493–513, and 532–552; these read MLPV…PLFI, AGGP…LYWF, LGIV…FVAT, LSWI…VGVL, YLTL…LAFA, and PLVM…FWGL.

The protein belongs to the AAE transporter (TC 2.A.81) family. YidE subfamily.

The protein localises to the cell membrane. The chain is Putative transport protein KPN78578_40470 from Klebsiella pneumoniae subsp. pneumoniae (strain ATCC 700721 / MGH 78578).